A 622-amino-acid chain; its full sequence is UvrABC system protein C (622 aa).

The region spanning 13-92 is the GIY-YIG domain; sequence DKPGVYLMKN…IKENRPKYNV (80 aa). In terms of domain architecture, UVR spans 205-240; it reads DELIKKIEEKMKRAAEKMDFEGAAHYRDQRQALLDI.

This sequence belongs to the UvrC family. In terms of assembly, interacts with UvrB in an incision complex.

The protein localises to the cytoplasm. The UvrABC repair system catalyzes the recognition and processing of DNA lesions. UvrC both incises the 5' and 3' sides of the lesion. The N-terminal half is responsible for the 3' incision and the C-terminal half is responsible for the 5' incision. This is UvrABC system protein C from Alkaliphilus metalliredigens (strain QYMF).